A 499-amino-acid polypeptide reads, in one-letter code: MMMKYEAVIIGGGPVGFMLASELAIAGVGTCVIERLEKPVPHSKALTLHPRTLELLEMRGILERFVSKGSKIPTGHFSMLDTRLDFSGLDTSCPYTLLLPQSKTEKLLEDHARSLGTEVFRGAEALAVTQNGEAVQTIFKDRDGSVRTITSKFAVGADGAGSTVRKQAKIEFPGTDSTVTAALGDVVLLSPPPSGVLSLCTKEGGVMIVPLSPDRYRVVVISPYRTQTPKDVPVTEEELKADLLRICGTDFGLTDPSWMSRFGNAARQAKRYRDGRIFLAGDAAHIHFPAGGQGLNVGLQDAMNLGWKLAAAIKGSAPSWLLDSYHDERHPAAEGLLRNTEAQTKLIDFTQAGLHLRSMMSELLAFPDVNRYVAGQISALDVRYEADRTMPPNRLNGARLPDMKLILSDGNSERLYSFLQNGTFVLLSLRQEADDHIEVKGLRTVTASLAEPNEKLRNVHTILIRPDGHVAWAVDASAPDCSEVIQKGISRWFSVTSRV.

Residues 6-35 (EAVI…VIER) and 272-282 (YRDGRIFLAGD) contribute to the FAD site.

It belongs to the PheA/TfdB FAD monooxygenase family. The cofactor is FAD.

This is an uncharacterized protein from Bacillus subtilis (strain 168).